A 427-amino-acid polypeptide reads, in one-letter code: Polyprenol-phosphate-mannose-dependent alpha-(1-2)-phosphatidylinositol mannoside mannosyltransferase (427 aa).

10 helical membrane-spanning segments follow: residues 18–38 (LWCLLWLLAGVALGYVAWRLF), 101–121 (ASVAITVLTLVLLIASTAIVL), 143–163 (WLAVLIVAPATIWLEPISSNF), 191–211 (LMLGLGIALKLTPAVFLLYFL), 218–238 (AALTALASFAVATLLGFVLAW), 279–299 (ERFALWVAGSLLVLAATIWAM), 308–328 (PTLAVICVALFGLVVSPVSWS), 331–346 (WVWMLPAVLVIGLLGW), 351–371 (VALAMLSLAGVVLMRWTPIDL), and 386–406 (LAGMSYVWWALAVIVVAGLTV).

The protein belongs to the glycosyltransferase 87 family.

It is found in the cell membrane. Its pathway is phospholipid metabolism; phosphatidylinositol metabolism. In terms of biological role, responsible for the addition of alpha-(1-2) mannose branches to the linear mannan core on the biosynthetic pathway to mature lipoarabinomannan (LAM). The protein is Polyprenol-phosphate-mannose-dependent alpha-(1-2)-phosphatidylinositol mannoside mannosyltransferase of Mycobacterium tuberculosis (strain ATCC 25618 / H37Rv).